We begin with the raw amino-acid sequence, 349 residues long: Glycosyltransferase 8 domain-containing protein 2 (349 aa).

Residues 1–6 are Cytoplasmic-facing; the sequence is MALLRK. Residues 7 to 24 traverse the membrane as a helical; Signal-anchor for type II membrane protein segment; it reads INQVLLFLLIVTLCVILY. The Lumenal portion of the chain corresponds to 25–349; sequence KKVHKGTVPK…AGIFKLNHHS (325 aa). Asparagine 234 carries N-linked (GlcNAc...) asparagine glycosylation.

Belongs to the glycosyltransferase 8 family.

Its subcellular location is the membrane. The sequence is that of Glycosyltransferase 8 domain-containing protein 2 (GLT8D2) from Homo sapiens (Human).